Reading from the N-terminus, the 406-residue chain is Tyrosine--tRNA ligase (406 aa).

An L-tyrosine-binding site is contributed by Y34. Residues 39 to 48 (PTADSLHVGH) carry the 'HIGH' region motif. Residues Y167 and Q171 each coordinate L-tyrosine. The 'KMSKS' region motif lies at 227–231 (KMGKT). K230 is a binding site for ATP. The S4 RNA-binding domain occupies 339 to 404 (RKIVDVLFEA…GKKEYHRLLV (66 aa)).

Belongs to the class-I aminoacyl-tRNA synthetase family. TyrS type 1 subfamily. As to quaternary structure, homodimer.

It localises to the cytoplasm. The enzyme catalyses tRNA(Tyr) + L-tyrosine + ATP = L-tyrosyl-tRNA(Tyr) + AMP + diphosphate + H(+). Functionally, catalyzes the attachment of tyrosine to tRNA(Tyr) in a two-step reaction: tyrosine is first activated by ATP to form Tyr-AMP and then transferred to the acceptor end of tRNA(Tyr). In Caldanaerobacter subterraneus subsp. tengcongensis (strain DSM 15242 / JCM 11007 / NBRC 100824 / MB4) (Thermoanaerobacter tengcongensis), this protein is Tyrosine--tRNA ligase.